Here is a 1022-residue protein sequence, read N- to C-terminus: Sodium/potassium-transporting ATPase subunit alpha-1 (1022 aa).

Positions 1-5 (MGRGT) are excised as a propeptide. The segment covering 1 to 10 (MGRGTGHDQY) has biased composition (basic and acidic residues). A disordered region spans residues 1 to 34 (MGRGTGHDQYELAATSEGGRKKKRDKKKKDMDDL). Over 6–86 (GHDQYELAAT…NALTPPPTTP (81 aa)) the chain is Cytoplasmic. Ser16 carries the phosphoserine; by PKC modification. Positions 81–83 (PPP) are interaction with phosphoinositide-3 kinase. A helical transmembrane segment spans residues 87-107 (EWVKFCRQLFGGFSMLLWIGA). Residues 108–130 (ILCFLAYGIQAASEDEPANDNLY) lie on the Extracellular side of the membrane. The helical transmembrane segment at 131 to 151 (LGVVLSAVVIITGCFSYYQEA) threads the bilayer. The Cytoplasmic segment spans residues 152 to 287 (KSSRIMDSFK…VGRTPISIEI (136 aa)). Residues 213–234 (DNSSLTGESEPQTRSPDFSNEN) form a disordered region. The helical transmembrane segment at 288–307 (EHFIHIITGVAVFLGVSFFI) threads the bilayer. Residues 308–319 (LSLILGYAWLEA) are Extracellular-facing. Residues 320–337 (VIFLIGIIVANVPEGLLA) form a helical membrane-spanning segment. Topologically, residues 338–771 (TVTVCLTLTA…EEGRLIFDNL (434 aa)) are cytoplasmic. Residue Asp375 is the 4-aspartylphosphate intermediate of the active site. ATP is bound at residue Lys486. The Mg(2+) site is built by Asp716 and Asp720. The helical transmembrane segment at 772-791 (KKSIAYTLTSNIPEITPFLL) threads the bilayer. The Extracellular portion of the chain corresponds to 792–801 (FIIANIPLPL). Residues 802–822 (GTVTILCIDLGTDMVPAISLA) traverse the membrane as a helical segment. Over 823 to 842 (YEAAESDIMKRQPRNPRTDK) the chain is Cytoplasmic. Residues 843 to 865 (LVNERLISIAYGQIGMMQATAGF) traverse the membrane as a helical segment. The Extracellular portion of the chain corresponds to 866–917 (FTYFVILAENGFLPSTLLGIRVKWDDKYVNDLEDSYGQQWTYEQRKIVEYTC). Residues 918 to 937 (HTSFFASIVIVQWADLIICK) form a helical membrane-spanning segment. Residues 938–950 (TRRNSIIQQGMKN) lie on the Cytoplasmic side of the membrane. Position 942 is a phosphoserine; by PKA (Ser942). A helical transmembrane segment spans residues 951–969 (KILIFGLFEETALAAFLSY). Topologically, residues 970–984 (CPGMDVALRMYPLKP) are extracellular. A helical membrane pass occupies residues 985–1005 (SWWFCAFPYSLLIFLYDEARR). Topologically, residues 1006-1022 (FILRRNPDGWVERETYY) are cytoplasmic.

The protein belongs to the cation transport ATPase (P-type) (TC 3.A.3) family. Type IIC subfamily. In terms of assembly, the sodium/potassium-transporting ATPase is composed of a catalytic alpha subunit, an auxiliary non-catalytic beta subunit and an additional regulatory subunit.

The protein resides in the cell membrane. Its subcellular location is the sarcolemma. It carries out the reaction K(+)(out) + Na(+)(in) + ATP + H2O = K(+)(in) + Na(+)(out) + ADP + phosphate + H(+). This is the catalytic component of the active enzyme, which catalyzes the hydrolysis of ATP coupled with the exchange of sodium and potassium ions across the plasma membrane. This action creates the electrochemical gradient of sodium and potassium ions, providing the energy for active transport of various nutrients. The polypeptide is Sodium/potassium-transporting ATPase subunit alpha-1 (atp1a1) (Anguilla anguilla (European freshwater eel)).